The primary structure comprises 289 residues: Phosphatidylglycerol--prolipoprotein diacylglyceryl transferase (289 aa).

Transmembrane regions (helical) follow at residues 23-43, 61-81, 99-119, 125-145, 199-219, 226-246, and 259-279; these read ALHW…WLAV, LLYM…VLFY, GGMS…WFAH, FFQV…AGRL, SQLY…NLFI, GSVS…TEFF, and LFSM…LMMV. Arginine 144 contacts a 1,2-diacyl-sn-glycero-3-phospho-(1'-sn-glycerol).

This sequence belongs to the Lgt family.

It localises to the cell inner membrane. It catalyses the reaction L-cysteinyl-[prolipoprotein] + a 1,2-diacyl-sn-glycero-3-phospho-(1'-sn-glycerol) = an S-1,2-diacyl-sn-glyceryl-L-cysteinyl-[prolipoprotein] + sn-glycerol 1-phosphate + H(+). The protein operates within protein modification; lipoprotein biosynthesis (diacylglyceryl transfer). Catalyzes the transfer of the diacylglyceryl group from phosphatidylglycerol to the sulfhydryl group of the N-terminal cysteine of a prolipoprotein, the first step in the formation of mature lipoproteins. This is Phosphatidylglycerol--prolipoprotein diacylglyceryl transferase from Pectobacterium carotovorum subsp. carotovorum (strain PC1).